The chain runs to 475 residues: Ribulose bisphosphate carboxylase large chain (475 aa).

Lys14 carries the post-translational modification N6,N6,N6-trimethyllysine. Positions 123 and 173 each coordinate substrate. Lys175 serves as the catalytic Proton acceptor. Lys177 contacts substrate. The Mg(2+) site is built by Lys201, Asp203, and Glu204. The residue at position 201 (Lys201) is an N6-carboxylysine. His294 (proton acceptor) is an active-site residue. Arg295, His327, and Ser379 together coordinate substrate.

This sequence belongs to the RuBisCO large chain family. Type I subfamily. In terms of assembly, heterohexadecamer of 8 large chains and 8 small chains; disulfide-linked. The disulfide link is formed within the large subunit homodimers. Mg(2+) serves as cofactor. The disulfide bond which can form in the large chain dimeric partners within the hexadecamer appears to be associated with oxidative stress and protein turnover.

Its subcellular location is the plastid. The catalysed reaction is 2 (2R)-3-phosphoglycerate + 2 H(+) = D-ribulose 1,5-bisphosphate + CO2 + H2O. The enzyme catalyses D-ribulose 1,5-bisphosphate + O2 = 2-phosphoglycolate + (2R)-3-phosphoglycerate + 2 H(+). In terms of biological role, ruBisCO catalyzes two reactions: the carboxylation of D-ribulose 1,5-bisphosphate, the primary event in carbon dioxide fixation, as well as the oxidative fragmentation of the pentose substrate in the photorespiration process. Both reactions occur simultaneously and in competition at the same active site. This is Ribulose bisphosphate carboxylase large chain (rbcL) from Euglena longa (Euglenophycean alga).